The sequence spans 341 residues: ATP-dependent 6-phosphofructokinase 2 (341 aa).

Residues Gly-10, 72–73 (RL), and 102–105 (GEGT) contribute to the ATP site. Glu-103 serves as a coordination point for Mg(2+). Substrate is bound by residues 125-127 (TID), Arg-162, 169-171 (MGR), Glu-222, Lys-266, and 272-275 (HVQR). Catalysis depends on Asp-127, which acts as the Proton acceptor.

Belongs to the phosphofructokinase type A (PFKA) family. Mixed-substrate PFK group III subfamily. As to quaternary structure, homodimer or homotetramer. It depends on Mg(2+) as a cofactor.

The protein localises to the cytoplasm. It catalyses the reaction beta-D-fructose 6-phosphate + ATP = beta-D-fructose 1,6-bisphosphate + ADP + H(+). It participates in carbohydrate degradation; glycolysis; D-glyceraldehyde 3-phosphate and glycerone phosphate from D-glucose: step 3/4. Its activity is regulated as follows. Allosterically inhibited by phosphoenolpyruvate. Its function is as follows. Catalyzes the phosphorylation of D-fructose 6-phosphate to fructose 1,6-bisphosphate by ATP, the first committing step of glycolysis. The protein is ATP-dependent 6-phosphofructokinase 2 of Streptomyces coelicolor (strain ATCC BAA-471 / A3(2) / M145).